Reading from the N-terminus, the 162-residue chain is Single-stranded DNA-binding protein 1 (162 aa).

The SSB domain occupies 5 to 110; sequence LNKVMLIGHL…IVCTDMQMLG (106 aa). The interval 110 to 162 is disordered; sequence GAKDSGGGTSDASYSQNRPSYSRPSRPEPSSGNYGASPSSGGAQEFEKDDLPF. The span at 122–140 shows a compositional bias: low complexity; the sequence is SYSQNRPSYSRPSRPEPSS. Polar residues predominate over residues 141 to 151; that stretch reads GNYGASPSSGG.

Homotetramer.

This Chlorobaculum tepidum (strain ATCC 49652 / DSM 12025 / NBRC 103806 / TLS) (Chlorobium tepidum) protein is Single-stranded DNA-binding protein 1 (ssb1).